Here is a 185-residue protein sequence, read N- to C-terminus: Threonylcarbamoyl-AMP synthase (185 aa).

The 181-residue stretch at 5-185 (NWRVRLAARI…RDGRTGQRLR (181 aa)) folds into the YrdC-like domain.

Belongs to the SUA5 family. TsaC subfamily.

Its subcellular location is the cytoplasm. It catalyses the reaction L-threonine + hydrogencarbonate + ATP = L-threonylcarbamoyladenylate + diphosphate + H2O. Its function is as follows. Required for the formation of a threonylcarbamoyl group on adenosine at position 37 (t(6)A37) in tRNAs that read codons beginning with adenine. Catalyzes the conversion of L-threonine, HCO(3)(-)/CO(2) and ATP to give threonylcarbamoyl-AMP (TC-AMP) as the acyladenylate intermediate, with the release of diphosphate. The polypeptide is Threonylcarbamoyl-AMP synthase (Nitrosococcus oceani (strain ATCC 19707 / BCRC 17464 / JCM 30415 / NCIMB 11848 / C-107)).